A 161-amino-acid chain; its full sequence is Urease accessory protein UreE (161 aa).

The tract at residues R138–G161 is disordered.

It belongs to the UreE family.

Its subcellular location is the cytoplasm. Involved in urease metallocenter assembly. Binds nickel. Probably functions as a nickel donor during metallocenter assembly. The chain is Urease accessory protein UreE from Agrobacterium fabrum (strain C58 / ATCC 33970) (Agrobacterium tumefaciens (strain C58)).